We begin with the raw amino-acid sequence, 92 residues long: DNA/RNA-binding protein Alba (92 aa).

Lys-11 is subject to N6-acetyllysine.

Belongs to the histone-like Alba family. Acetylated. Acetylation at Lys-11 decreases DNA-binding affinity.

It is found in the cytoplasm. Its subcellular location is the chromosome. In terms of biological role, binds double-stranded DNA tightly but without sequence specificity. Involved in DNA compaction. This chain is DNA/RNA-binding protein Alba, found in Pyrobaculum calidifontis (strain DSM 21063 / JCM 11548 / VA1).